A 348-amino-acid chain; its full sequence is Mitogen-activated protein kinase 14B (348 aa).

Residues 25-309 (YQNLSPVGSG…ASQALAHPYF (285 aa)) enclose the Protein kinase domain. Residues 31–39 (VGSGAYGSV) and lysine 54 each bind ATP. The active-site Proton acceptor is the aspartate 169. Threonine 181 is subject to Phosphothreonine; by MAP2K3. The TXY signature appears at 181-183 (TGY). At tyrosine 183 the chain carries Phosphotyrosine; by MAP2K3.

The protein belongs to the protein kinase superfamily. CMGC Ser/Thr protein kinase family. MAP kinase subfamily. It depends on Mg(2+) as a cofactor. In terms of processing, dually phosphorylated on Thr-181 and Tyr-183, which activates the enzyme.

The protein localises to the cytoplasm. Its subcellular location is the nucleus. The enzyme catalyses L-seryl-[protein] + ATP = O-phospho-L-seryl-[protein] + ADP + H(+). It carries out the reaction L-threonyl-[protein] + ATP = O-phospho-L-threonyl-[protein] + ADP + H(+). Its activity is regulated as follows. Activated by threonine and tyrosine phosphorylation by the dual specificity kinase, MKK3. Functionally, serine/threonine kinase which acts as an essential component of the MAP kinase signal transduction pathway. Mapk14b is one of the four p38 MAPKs which play an important role in the cascades of cellular responses evoked by extracellular stimuli such as pro-inflammatory cytokines or physical stress leading to direct activation of transcription factors. Accordingly, p38 MAPKs phosphorylate a broad range of proteins and it has been estimated that they may have approximately 200 to 300 substrates each. Some of the targets are downstream kinases which are activated through phosphorylation and further phosphorylate additional targets. The polypeptide is Mitogen-activated protein kinase 14B (mapk14b) (Danio rerio (Zebrafish)).